The primary structure comprises 272 residues: Shikimate dehydrogenase (NADP(+)) (272 aa).

Shikimate contacts are provided by residues 14-16 (SKS) and Thr-61. The Proton acceptor role is filled by Lys-65. Glu-77 contributes to the NADP(+) binding site. Residues Asn-86 and Asp-102 each contribute to the shikimate site. Residues 126–130 (GAGGA), 149–154 (NRTYSR), and Met-213 each bind NADP(+). Tyr-215 contributes to the shikimate binding site. NADP(+) is bound at residue Gly-237.

It belongs to the shikimate dehydrogenase family. As to quaternary structure, homodimer.

The catalysed reaction is shikimate + NADP(+) = 3-dehydroshikimate + NADPH + H(+). Its pathway is metabolic intermediate biosynthesis; chorismate biosynthesis; chorismate from D-erythrose 4-phosphate and phosphoenolpyruvate: step 4/7. Functionally, involved in the biosynthesis of the chorismate, which leads to the biosynthesis of aromatic amino acids. Catalyzes the reversible NADPH linked reduction of 3-dehydroshikimate (DHSA) to yield shikimate (SA). The protein is Shikimate dehydrogenase (NADP(+)) of Enterobacter sp. (strain 638).